We begin with the raw amino-acid sequence, 639 residues long: Chaperone protein DnaK (639 aa).

A Phosphothreonine; by autocatalysis modification is found at T198. Residues 601–639 form a disordered region; sequence AQQAPGADSCGGDCGQQQEAGAKPKDEKVVDADFEEVKK. The span at 622-639 shows a compositional bias: basic and acidic residues; that stretch reads AKPKDEKVVDADFEEVKK.

Belongs to the heat shock protein 70 family.

Functionally, acts as a chaperone. This Trichlorobacter lovleyi (strain ATCC BAA-1151 / DSM 17278 / SZ) (Geobacter lovleyi) protein is Chaperone protein DnaK.